Reading from the N-terminus, the 565-residue chain is Proline--tRNA ligase (565 aa).

The protein belongs to the class-II aminoacyl-tRNA synthetase family. ProS type 1 subfamily. In terms of assembly, homodimer.

It is found in the cytoplasm. It catalyses the reaction tRNA(Pro) + L-proline + ATP = L-prolyl-tRNA(Pro) + AMP + diphosphate. Its function is as follows. Catalyzes the attachment of proline to tRNA(Pro) in a two-step reaction: proline is first activated by ATP to form Pro-AMP and then transferred to the acceptor end of tRNA(Pro). As ProRS can inadvertently accommodate and process non-cognate amino acids such as alanine and cysteine, to avoid such errors it has two additional distinct editing activities against alanine. One activity is designated as 'pretransfer' editing and involves the tRNA(Pro)-independent hydrolysis of activated Ala-AMP. The other activity is designated 'posttransfer' editing and involves deacylation of mischarged Ala-tRNA(Pro). The misacylated Cys-tRNA(Pro) is not edited by ProRS. The protein is Proline--tRNA ligase of Lactobacillus delbrueckii subsp. bulgaricus (strain ATCC BAA-365 / Lb-18).